The primary structure comprises 302 residues: 4-hydroxy-tetrahydrodipicolinate synthase (302 aa).

T55 serves as a coordination point for pyruvate. The Proton donor/acceptor role is filled by Y144. The active-site Schiff-base intermediate with substrate is K172. Residue V214 coordinates pyruvate.

This sequence belongs to the DapA family. Homotetramer; dimer of dimers.

It localises to the cytoplasm. The enzyme catalyses L-aspartate 4-semialdehyde + pyruvate = (2S,4S)-4-hydroxy-2,3,4,5-tetrahydrodipicolinate + H2O + H(+). It functions in the pathway amino-acid biosynthesis; L-lysine biosynthesis via DAP pathway; (S)-tetrahydrodipicolinate from L-aspartate: step 3/4. In terms of biological role, catalyzes the condensation of (S)-aspartate-beta-semialdehyde [(S)-ASA] and pyruvate to 4-hydroxy-tetrahydrodipicolinate (HTPA). This is 4-hydroxy-tetrahydrodipicolinate synthase from Prochlorococcus marinus (strain SARG / CCMP1375 / SS120).